A 520-amino-acid chain; its full sequence is 1,4-alpha-glucan branching enzyme TTHA1902 (520 aa).

Catalysis depends on Glu-184, which acts as the Nucleophile. Substrate contacts are provided by Arg-265 and Gly-282. Residue Asp-353 is the Proton donor of the active site. The substrate site is built by Trp-404, Asp-460, and Gln-469.

The protein belongs to the glycosyl hydrolase 57 family.

It carries out the reaction Transfers a segment of a (1-&gt;4)-alpha-D-glucan chain to a primary hydroxy group in a similar glucan chain.. It functions in the pathway glycan biosynthesis; glycogen biosynthesis. Its function is as follows. Catalyzes the formation of branch points in alpha-glucans by cleavage of an alpha-1,4 glycosidic bond and subsequent transfer of the cleaved-off oligosaccharide to a new alpha-1,6 position. The branch chain-length distribution of the reaction products shows degree of polymerization (DP) of 3 to 13, with two local maxima at DP 7 and DP 11. Exhibits an alpha-retaining catalytic mechanism. Is involved in glycogen biosynthesis. Shows a secondary activity, i.e. the hydrolysis of the substrate, being 4% of the total activity. Can use amylose as substrate but not alpha-1,4-linked oligosaccharides of 2-7 glucose residues, beta-cyclodextrin, 6-O-glucosyl-beta-cyclodextrin and 6-O-maltosyl-beta-cyclodextrin. Is not able to branch amylopectin further, it only hydrolyzes amylopectin. Thus, displays preference for linear and long substrates (amylose) over branched structures (amylopectin). This chain is 1,4-alpha-glucan branching enzyme TTHA1902, found in Thermus thermophilus (strain ATCC 27634 / DSM 579 / HB8).